Consider the following 132-residue polypeptide: Small ribosomal subunit protein uS8 (132 aa).

Belongs to the universal ribosomal protein uS8 family. Part of the 30S ribosomal subunit. Contacts proteins S5 and S12.

Functionally, one of the primary rRNA binding proteins, it binds directly to 16S rRNA central domain where it helps coordinate assembly of the platform of the 30S subunit. This Agrobacterium fabrum (strain C58 / ATCC 33970) (Agrobacterium tumefaciens (strain C58)) protein is Small ribosomal subunit protein uS8.